Consider the following 123-residue polypeptide: KxDL motif-containing protein LO9-177 (123 aa).

The KxDL signature appears at 78–81 (KDDL).

Belongs to the KXD1 family. As to quaternary structure, homodimer. Component of a nuclear cell elongation controlling complex made of ILI5/BUL1, LO9-177 and BC1. Binds directly to ILI5/BUL1, ILI4/BU1, BUL2 and BUL3. Binds to BC1 in the nucleus. Interacts with BCL1.

It is found in the nucleus. It localises to the cytoplasm. In terms of biological role, contributes, together with ILI5/BUL1 and BC1, to the promotion of leaf inclination and grain size by modulating cell elongation. The polypeptide is KxDL motif-containing protein LO9-177 (Oryza sativa subsp. indica (Rice)).